The primary structure comprises 446 residues: Adenylosuccinate synthetase (446 aa).

GTP contacts are provided by residues 20 to 26 (GDEGKGK) and 48 to 50 (GHT). D21 functions as the Proton acceptor in the catalytic mechanism. Residues D21 and G48 each coordinate Mg(2+). IMP is bound by residues 21-24 (DEGK), 46-49 (NAGH), T137, R151, Q232, T247, and R319. H49 functions as the Proton donor in the catalytic mechanism. 315–321 (SVTGRPR) serves as a coordination point for substrate. GTP contacts are provided by residues R321, 347–349 (KLD), and 429–431 (STG).

The protein belongs to the adenylosuccinate synthetase family. In terms of assembly, homodimer. It depends on Mg(2+) as a cofactor.

The protein resides in the cytoplasm. It carries out the reaction IMP + L-aspartate + GTP = N(6)-(1,2-dicarboxyethyl)-AMP + GDP + phosphate + 2 H(+). The protein operates within purine metabolism; AMP biosynthesis via de novo pathway; AMP from IMP: step 1/2. Plays an important role in the de novo pathway of purine nucleotide biosynthesis. Catalyzes the first committed step in the biosynthesis of AMP from IMP. This is Adenylosuccinate synthetase from Polynucleobacter necessarius subsp. necessarius (strain STIR1).